A 205-amino-acid polypeptide reads, in one-letter code: Lipoprotein MlpB (205 aa).

An N-terminal signal peptide occupies residues 1-17 (MKIINILFCLLLIVLNS). C18 carries N-palmitoyl cysteine lipidation. A lipid anchor (S-diacylglycerol cysteine) is attached at C18.

It belongs to the Multicopy lipoprotein (Mlp) family.

It localises to the cell outer membrane. Functionally, an outer membrane protein that may participate in pathogenesis. Some human Lyme disease patients have antibodies against this protein. The Mlp proteins probably undergo intragenic recombination, generating new alleles. This is Lipoprotein MlpB from Borreliella burgdorferi (strain ATCC 35210 / DSM 4680 / CIP 102532 / B31) (Borrelia burgdorferi).